The sequence spans 159 residues: 2-C-methyl-D-erythritol 2,4-cyclodiphosphate synthase (159 aa).

A divalent metal cation is bound by residues Asp10 and His12. Residues 10–12 (DVH) and 36–37 (HS) each bind 4-CDP-2-C-methyl-D-erythritol 2-phosphate. Residue His44 coordinates a divalent metal cation. Residues 58-60 (DIG), 134-137 (TTTE), Phe141, and Arg144 each bind 4-CDP-2-C-methyl-D-erythritol 2-phosphate.

It belongs to the IspF family. Homotrimer. A divalent metal cation serves as cofactor.

It catalyses the reaction 4-CDP-2-C-methyl-D-erythritol 2-phosphate = 2-C-methyl-D-erythritol 2,4-cyclic diphosphate + CMP. It participates in isoprenoid biosynthesis; isopentenyl diphosphate biosynthesis via DXP pathway; isopentenyl diphosphate from 1-deoxy-D-xylulose 5-phosphate: step 4/6. Its function is as follows. Involved in the biosynthesis of isopentenyl diphosphate (IPP) and dimethylallyl diphosphate (DMAPP), two major building blocks of isoprenoid compounds. Catalyzes the conversion of 4-diphosphocytidyl-2-C-methyl-D-erythritol 2-phosphate (CDP-ME2P) to 2-C-methyl-D-erythritol 2,4-cyclodiphosphate (ME-CPP) with a corresponding release of cytidine 5-monophosphate (CMP). This chain is 2-C-methyl-D-erythritol 2,4-cyclodiphosphate synthase, found in Bacteroides fragilis (strain ATCC 25285 / DSM 2151 / CCUG 4856 / JCM 11019 / LMG 10263 / NCTC 9343 / Onslow / VPI 2553 / EN-2).